The sequence spans 255 residues: NAD kinase (255 aa).

The active-site Proton acceptor is the Asp44. Residues 44–45, His49, 114–115, Asp144, Ala152, 155–160, and Gln216 contribute to the NAD(+) site; these read DG, NE, and SAYNLS.

Belongs to the NAD kinase family. The cofactor is a divalent metal cation.

The protein resides in the cytoplasm. It carries out the reaction NAD(+) + ATP = ADP + NADP(+) + H(+). Its function is as follows. Involved in the regulation of the intracellular balance of NAD and NADP, and is a key enzyme in the biosynthesis of NADP. Catalyzes specifically the phosphorylation on 2'-hydroxyl of the adenosine moiety of NAD to yield NADP. This chain is NAD kinase, found in Rickettsia conorii (strain ATCC VR-613 / Malish 7).